Consider the following 88-residue polypeptide: Beta-insect excitatory toxin 1 (88 aa).

Positions 1–18 (MKFLLLFLVVLPIMGVFG) are cleaved as a signal peptide. An LCN-type CS-alpha/beta domain is found at 20 to 83 (KNGYAVDSSG…ISDTRKSYCD (64 aa)). 4 disulfide bridges follow: Cys-34/Cys-55, Cys-40/Cys-60, Cys-44/Cys-62, and Cys-56/Cys-82.

Belongs to the long (4 C-C) scorpion toxin superfamily. Sodium channel inhibitor family. Beta subfamily. Expressed by the venom gland.

It localises to the secreted. Functionally, excitatory insect beta-toxins induce a spastic paralysis. They bind voltage-independently at site-4 of sodium channels (Nav) and shift the voltage of activation toward more negative potentials thereby affecting sodium channel activation and promoting spontaneous and repetitive firing. This toxin is active only on insects. In Androctonus australis (Sahara scorpion), this protein is Beta-insect excitatory toxin 1.